The sequence spans 229 residues: 3-dehydroquinate dehydratase (229 aa).

3-dehydroquinate-binding positions include 33-35 (EWR) and Arg65. The active-site Proton donor/acceptor is the His121. Lys146 (schiff-base intermediate with substrate) is an active-site residue. 3 residues coordinate 3-dehydroquinate: Arg188, Ser207, and Gln211.

Belongs to the type-I 3-dehydroquinase family. In terms of assembly, homodimer.

It carries out the reaction 3-dehydroquinate = 3-dehydroshikimate + H2O. The protein operates within metabolic intermediate biosynthesis; chorismate biosynthesis; chorismate from D-erythrose 4-phosphate and phosphoenolpyruvate: step 3/7. Involved in the third step of the chorismate pathway, which leads to the biosynthesis of aromatic amino acids. Catalyzes the cis-dehydration of 3-dehydroquinate (DHQ) and introduces the first double bond of the aromatic ring to yield 3-dehydroshikimate. The sequence is that of 3-dehydroquinate dehydratase from Lactococcus lactis subsp. cremoris (strain MG1363).